The sequence spans 104 residues: ATP-dependent Clp protease adapter protein ClpS (104 aa).

This sequence belongs to the ClpS family. Binds to the N-terminal domain of the chaperone ClpA.

In terms of biological role, involved in the modulation of the specificity of the ClpAP-mediated ATP-dependent protein degradation. The sequence is that of ATP-dependent Clp protease adapter protein ClpS from Oleidesulfovibrio alaskensis (strain ATCC BAA-1058 / DSM 17464 / G20) (Desulfovibrio alaskensis).